An 87-amino-acid chain; its full sequence is Protein Isd11 (87 aa).

The protein belongs to the complex I LYR family. As to quaternary structure, interacts with IscS; the interaction enhances cysteine desulfurase activity of IscS. Component of a complex, at least composed of IscS, Isd11 and IscU.

Its subcellular location is the mitochondrion. It functions in the pathway cofactor biosynthesis; iron-sulfur cluster biosynthesis. In terms of biological role, participates in iron-sulfur cluster formation (ISC) pathway for iron-sulfur (Fe-S) cluster biogenesis. Enhances cysteine desulfurase activity of IscS. In Plasmodium falciparum (isolate 3D7), this protein is Protein Isd11.